We begin with the raw amino-acid sequence, 546 residues long: Glucose-6-phosphate isomerase (546 aa).

The Proton donor role is filled by Glu356. Residues His387 and Lys507 contribute to the active site.

The protein belongs to the GPI family.

Its subcellular location is the cytoplasm. The catalysed reaction is alpha-D-glucose 6-phosphate = beta-D-fructose 6-phosphate. The protein operates within carbohydrate biosynthesis; gluconeogenesis. It functions in the pathway carbohydrate degradation; glycolysis; D-glyceraldehyde 3-phosphate and glycerone phosphate from D-glucose: step 2/4. In terms of biological role, catalyzes the reversible isomerization of glucose-6-phosphate to fructose-6-phosphate. This chain is Glucose-6-phosphate isomerase, found in Syntrophus aciditrophicus (strain SB).